An 85-amino-acid polypeptide reads, in one-letter code: Small ribosomal subunit protein bS16 (85 aa).

The protein belongs to the bacterial ribosomal protein bS16 family.

In Xanthomonas euvesicatoria pv. vesicatoria (strain 85-10) (Xanthomonas campestris pv. vesicatoria), this protein is Small ribosomal subunit protein bS16.